The chain runs to 306 residues: Large ribosomal subunit protein uL2m (306 aa).

A mitochondrion-targeting transit peptide spans 1–60 (MALCALTSALRSLSLASAAITARVPTLLPAAQIQSNVLLQLPPALVSPSYRPVHMSADRS).

Belongs to the universal ribosomal protein uL2 family. In terms of assembly, component of the mitochondrial ribosome large subunit (39S) which comprises a 16S rRNA and about 50 distinct proteins.

The protein localises to the mitochondrion. The chain is Large ribosomal subunit protein uL2m (Mrpl2) from Mus musculus (Mouse).